We begin with the raw amino-acid sequence, 603 residues long: NADH-ubiquinone oxidoreductase chain 5 (603 aa).

The next 17 helical transmembrane spans lie at 4-24 (YATMTTLALTSLIPPILTTFI), 38-58 (SIVASTFIISLFPTTMFLCLD), 87-107 (MMFIPVALFVTWSIMEFSLWY), 114-134 (INQFFKYLLIFLITMLILVTA), 140-160 (LFIGWEGVGIMSFLLIGWWYA), 171-191 (AILYNRIGDIGFILALAWFLL), 210-230 (LIPLLGFLLAAAGKSAQLGLH), 241-261 (TPVSALLHSSTMVVAGVFLLI), 272-292 (LAQTLTLCLGAITTLFAAVCA), 301-320 (IVAFSTSSQLGLMVATIGIG), 325-347 (AFLHICTHAFFKAMLFMCSGSII), 370-390 (STSLAIGSLALMGMPFLTGFY), 407-429 (WALSIILIATSLTSAYSTRMILL), 457-477 (LTIGSLFAGFFITNNILPTSV), 482-502 (IPLYLKLTALSITLLGLLTAL), 537-557 (IPYLGLLMSQNLPLLLLDLIW), and 582-602 (GLIKLYFLSFFFPLLLILLLI).

Belongs to the complex I subunit 5 family. As to quaternary structure, core subunit of respiratory chain NADH dehydrogenase (Complex I) which is composed of 45 different subunits.

It localises to the mitochondrion inner membrane. The enzyme catalyses a ubiquinone + NADH + 5 H(+)(in) = a ubiquinol + NAD(+) + 4 H(+)(out). Core subunit of the mitochondrial membrane respiratory chain NADH dehydrogenase (Complex I) which catalyzes electron transfer from NADH through the respiratory chain, using ubiquinone as an electron acceptor. Essential for the catalytic activity and assembly of complex I. The polypeptide is NADH-ubiquinone oxidoreductase chain 5 (MT-ND5) (Gorilla gorilla gorilla (Western lowland gorilla)).